Reading from the N-terminus, the 237-residue chain is Small ribosomal subunit protein uS3 (237 aa).

In terms of domain architecture, KH type-2 spans 39-107; it reads IRAYLMEELK…ETHLNIVEVR (69 aa). The segment at 213–237 is disordered; that stretch reads MASERRATESDNQGGSGRERRRENA.

It belongs to the universal ribosomal protein uS3 family. Part of the 30S ribosomal subunit. Forms a tight complex with proteins S10 and S14.

Binds the lower part of the 30S subunit head. Binds mRNA in the 70S ribosome, positioning it for translation. This is Small ribosomal subunit protein uS3 from Rhizobium meliloti (strain 1021) (Ensifer meliloti).